A 353-amino-acid polypeptide reads, in one-letter code: Ornithine racemase (353 aa).

K35 functions as the Proton acceptor in the catalytic mechanism. K35 is modified (N6-(pyridoxal phosphate)lysine). A substrate-binding site is contributed by R128.

Belongs to the alanine racemase family. As to quaternary structure, homodimer. The cofactor is pyridoxal 5'-phosphate.

The enzyme catalyses L-ornithine = D-ornithine. Its function is as follows. Involved in the ornithine fermentation pathway. Catalyzes the conversion of L-ornithine to D-ornithine. OR could also racemize basic amino acids such as lysine and arginine. Serine, asparagine and alanine could be also converted by OR, but at a lower rate. The sequence is that of Ornithine racemase from Acetoanaerobium sticklandii (strain ATCC 12662 / DSM 519 / JCM 1433 / CCUG 9281 / NCIMB 10654 / HF) (Clostridium sticklandii).